The sequence spans 182 residues: UPF0397 protein SPH_0594 (182 aa).

5 helical membrane-spanning segments follow: residues 10–30 (VVAVGIGAALFVVIGMINIPT), 46–66 (LLSIIFGPIIGLLVGVIGHAI), 73–93 (YGLWWTWIIASGLFGLVVGLF), 109–129 (ILIFNLIQLLANALVWGVLAP), and 148–168 (IVAGIANGVSVAIAGTLLLLA).

It belongs to the UPF0397 family.

The protein resides in the cell membrane. This is UPF0397 protein SPH_0594 from Streptococcus pneumoniae (strain Hungary19A-6).